Consider the following 199-residue polypeptide: MSLFALFYMLFAYLLGSVSSAILICRIAGLPDPRQNGSHNPGATNVLRIGNRKSALAVLIFDMLKGMIPVWAGYYLGLTQFELGMVALGACLGHIFPIFFQFKGGKGVATAFGAIAPISWAVAGSMFGTWIFVFLVSGYSSLSAVISALLVPFYVWWFKPEFTFPVALVCCLLIYRHHDNIQRLWRGQEDKVWAKFKKK.

The next 5 helical transmembrane spans lie at 4-24 (FALFYMLFAYLLGSVSSAILI), 56-76 (LAVLIFDMLKGMIPVWAGYYL), 80-100 (QFELGMVALGACLGHIFPIFF), 115-135 (IAPISWAVAGSMFGTWIFVFL), and 154-176 (YVWWFKPEFTFPVALVCCLLIYR).

It belongs to the PlsY family. Probably interacts with PlsX.

It localises to the cell inner membrane. The catalysed reaction is an acyl phosphate + sn-glycerol 3-phosphate = a 1-acyl-sn-glycero-3-phosphate + phosphate. Its pathway is lipid metabolism; phospholipid metabolism. Functionally, catalyzes the transfer of an acyl group from acyl-phosphate (acyl-PO(4)) to glycerol-3-phosphate (G3P) to form lysophosphatidic acid (LPA). This enzyme utilizes acyl-phosphate as fatty acyl donor, but not acyl-CoA or acyl-ACP. This chain is Glycerol-3-phosphate acyltransferase, found in Haemophilus influenzae (strain PittEE).